The sequence spans 344 residues: Uroporphyrinogen decarboxylase (344 aa).

Substrate-binding positions include 24-28 (RQAGR), F43, D74, Y149, S204, and H319.

It belongs to the uroporphyrinogen decarboxylase family. As to quaternary structure, homodimer.

The protein localises to the cytoplasm. It catalyses the reaction uroporphyrinogen III + 4 H(+) = coproporphyrinogen III + 4 CO2. Its pathway is porphyrin-containing compound metabolism; protoporphyrin-IX biosynthesis; coproporphyrinogen-III from 5-aminolevulinate: step 4/4. Its function is as follows. Catalyzes the decarboxylation of four acetate groups of uroporphyrinogen-III to yield coproporphyrinogen-III. This Agrobacterium fabrum (strain C58 / ATCC 33970) (Agrobacterium tumefaciens (strain C58)) protein is Uroporphyrinogen decarboxylase.